We begin with the raw amino-acid sequence, 335 residues long: Holliday junction branch migration complex subunit RuvB (335 aa).

Residues Val-4 to Tyr-184 are large ATPase domain (RuvB-L). ATP-binding positions include Ile-23, Arg-24, Gly-65, Lys-68, Thr-69, Thr-70, Glu-131–Tyr-133, Arg-174, Tyr-184, and Arg-221. Thr-69 serves as a coordination point for Mg(2+). A small ATPAse domain (RuvB-S) region spans residues Ser-185 to Asp-255. The segment at Leu-258 to Lys-335 is head domain (RuvB-H). DNA-binding residues include Arg-294, Arg-313, and Arg-318.

The protein belongs to the RuvB family. In terms of assembly, homohexamer. Forms an RuvA(8)-RuvB(12)-Holliday junction (HJ) complex. HJ DNA is sandwiched between 2 RuvA tetramers; dsDNA enters through RuvA and exits via RuvB. An RuvB hexamer assembles on each DNA strand where it exits the tetramer. Each RuvB hexamer is contacted by two RuvA subunits (via domain III) on 2 adjacent RuvB subunits; this complex drives branch migration. In the full resolvosome a probable DNA-RuvA(4)-RuvB(12)-RuvC(2) complex forms which resolves the HJ.

The protein resides in the cytoplasm. The catalysed reaction is ATP + H2O = ADP + phosphate + H(+). In terms of biological role, the RuvA-RuvB-RuvC complex processes Holliday junction (HJ) DNA during genetic recombination and DNA repair, while the RuvA-RuvB complex plays an important role in the rescue of blocked DNA replication forks via replication fork reversal (RFR). RuvA specifically binds to HJ cruciform DNA, conferring on it an open structure. The RuvB hexamer acts as an ATP-dependent pump, pulling dsDNA into and through the RuvAB complex. RuvB forms 2 homohexamers on either side of HJ DNA bound by 1 or 2 RuvA tetramers; 4 subunits per hexamer contact DNA at a time. Coordinated motions by a converter formed by DNA-disengaged RuvB subunits stimulates ATP hydrolysis and nucleotide exchange. Immobilization of the converter enables RuvB to convert the ATP-contained energy into a lever motion, pulling 2 nucleotides of DNA out of the RuvA tetramer per ATP hydrolyzed, thus driving DNA branch migration. The RuvB motors rotate together with the DNA substrate, which together with the progressing nucleotide cycle form the mechanistic basis for DNA recombination by continuous HJ branch migration. Branch migration allows RuvC to scan DNA until it finds its consensus sequence, where it cleaves and resolves cruciform DNA. The sequence is that of Holliday junction branch migration complex subunit RuvB from Histophilus somni (strain 129Pt) (Haemophilus somnus).